The following is a 226-amino-acid chain: Ribonuclease 3 (226 aa).

One can recognise an RNase III domain in the interval 6–128 (TKKIQKVLGY…LIGSIYLDSN (123 aa)). E41 is a Mg(2+) binding site. The active site involves D45. The Mg(2+) site is built by N114 and E117. The active site involves E117. Positions 155–225 (DPKTRLQEYL…AQKALIKLGV (71 aa)) constitute a DRBM domain.

The protein belongs to the ribonuclease III family. As to quaternary structure, homodimer. Requires Mg(2+) as cofactor.

It is found in the cytoplasm. It catalyses the reaction Endonucleolytic cleavage to 5'-phosphomonoester.. In terms of biological role, digests double-stranded RNA. Involved in the processing of primary rRNA transcript to yield the immediate precursors to the large and small rRNAs (23S and 16S). Processes some mRNAs, and tRNAs when they are encoded in the rRNA operon. Processes pre-crRNA and tracrRNA of type II CRISPR loci if present in the organism. The polypeptide is Ribonuclease 3 (Buchnera aphidicola subsp. Acyrthosiphon pisum (strain 5A)).